A 219-amino-acid polypeptide reads, in one-letter code: PKHD-type hydroxylase Plav_0037 (219 aa).

Residues 78–172 (NFIRILLSRY…RRAAVGWIRS (95 aa)) enclose the Fe2OG dioxygenase domain. Residues His96, Asp98, and His153 each coordinate Fe cation. Arg163 contacts 2-oxoglutarate.

Requires Fe(2+) as cofactor. L-ascorbate is required as a cofactor.

The polypeptide is PKHD-type hydroxylase Plav_0037 (Parvibaculum lavamentivorans (strain DS-1 / DSM 13023 / NCIMB 13966)).